The sequence spans 898 residues: Protein argonaute 1 (898 aa).

The tract at residues 1–52 (MLALNAGSQYPGRGRGRGRGDGGNRVHKHDGINRYHGGFRGGRGGGGGGFRD) is disordered. Residues 18–33 (GRGDGGNRVHKHDGIN) are compositionally biased toward basic and acidic residues. Residues 38-50 (GFRGGRGGGGGGF) show a composition bias toward gly residues. One can recognise a PAZ domain in the interval 283–378 (KCSDEMRRLR…IFADRTKMSR (96 aa)). The Piwi domain maps to 542-883 (FAMVKLRTKE…YARKYGSLKS (342 aa)).

This sequence belongs to the argonaute family.

The protein localises to the cytoplasm. Involved in RNA-mediated gene silencing (RNAi) of mobile elements and repeats including retroposons SLACS (Spliced Leader Associated Conserved Sequence), TATE (Telomere-Associated Transposable Element) and TAS-like sequences (Telomere Associated Sequence), and a family of 74-nucleotide long tandem repeats, CIR74. Predominantly binds to siRNAs derived from SLACS and TATE transposable elements and to a lesser extent to siRNAs from TAS-like and CIR74 elements. The sequence is that of Protein argonaute 1 from Leishmania braziliensis.